The following is a 740-amino-acid chain: Melanoma-associated antigen D4 (740 aa).

Basic and acidic residues predominate over residues 1-11 (MAEGSYRKESE). 4 disordered regions span residues 1–27 (MAEGSYRKESEGYNVEDMDEGSDEVGE), 139–208 (ATHQ…GPST), 242–298 (PAGV…ALAK), and 321–377 (IPEP…ASQP). The span at 14 to 27 (NVEDMDEGSDEVGE) shows a compositional bias: acidic residues. Polar residues-rich tracts occupy residues 141–155 (HQASGGDTQPMTSAA) and 162–175 (PETSVASPHSSRML). Low complexity predominate over residues 185 to 207 (APARSPQPQTSSQAQEAAAEGPS). The span at 321–337 (IPEPESAAATSQQSAEP) shows a compositional bias: low complexity. The span at 354-363 (DEYESGEEER) shows a compositional bias: acidic residues. Positions 414–612 (LQERANKLVK…REWRAHFLEA (199 aa)) constitute an MAGE domain. The interval 697–722 (WRAGVSSGTNGAASASMLDGPSTSST) is disordered.

As to quaternary structure, interacts with TRIM27.

Its function is as follows. May enhance ubiquitin ligase activity of RING-type zinc finger-containing E3 ubiquitin-protein ligases. Proposed to act through recruitment and/or stabilization of the Ubl-conjugating enzyme (E2) at the E3:substrate complex. The protein is Melanoma-associated antigen D4 (MAGED4) of Bos taurus (Bovine).